We begin with the raw amino-acid sequence, 370 residues long: tRNA-specific 2-thiouridylase MnmA (370 aa).

ATP-binding positions include 24 to 31 (AMSGGVDS) and Leu-50. The active-site Nucleophile is Cys-118. Residues Cys-118 and Cys-214 are joined by a disulfide bond. Gly-142 lines the ATP pocket. Residues 164–166 (KDQ) are interaction with tRNA. Cys-214 functions as the Cysteine persulfide intermediate in the catalytic mechanism.

It belongs to the MnmA/TRMU family.

The protein localises to the cytoplasm. It carries out the reaction S-sulfanyl-L-cysteinyl-[protein] + uridine(34) in tRNA + AH2 + ATP = 2-thiouridine(34) in tRNA + L-cysteinyl-[protein] + A + AMP + diphosphate + H(+). Functionally, catalyzes the 2-thiolation of uridine at the wobble position (U34) of tRNA, leading to the formation of s(2)U34. The chain is tRNA-specific 2-thiouridylase MnmA from Ehrlichia ruminantium (strain Welgevonden).